Consider the following 293-residue polypeptide: Nucleotide-binding protein Dole_0503 (293 aa).

11–18 (GLSGSGKS) is a binding site for ATP. 62–65 (DLRE) contacts GTP.

It belongs to the RapZ-like family.

Its function is as follows. Displays ATPase and GTPase activities. This chain is Nucleotide-binding protein Dole_0503, found in Desulfosudis oleivorans (strain DSM 6200 / JCM 39069 / Hxd3) (Desulfococcus oleovorans).